A 616-amino-acid chain; its full sequence is Polypeptide N-acetylgalactosaminyltransferase 3 (616 aa).

The chain crosses the membrane as a helical; Signal-anchor for type II membrane protein span at residues 13–33 (FFHWKLWKFSIIVFVFLVFLF). Residues 182–291 (LPTTSIIIVF…YGWLEPLLAR (110 aa)) form a catalytic subdomain A region. Positions 275, 277, and 413 each coordinate Mn(2+). The catalytic subdomain B stretch occupies residues 354-416 (PIRTPTFAGG…PCSVVGHVFR (63 aa)). A glycan (N-linked (GlcNAc...) asparagine) is linked at N482. Positions 512–616 (NRMCLDVGEN…FQKWIFGQND (105 aa)) constitute a Ricin B-type lectin domain. An intrachain disulfide couples C515 to C533. 4 residues coordinate UDP-N-acetyl-alpha-D-galactosamine: D517, E520, H534, and N539. A disulfide bridge links C588 with C601.

The protein belongs to the glycosyltransferase 2 family. GalNAc-T subfamily. Mn(2+) is required as a cofactor.

Its subcellular location is the golgi apparatus. It localises to the golgi stack membrane. It catalyses the reaction L-seryl-[protein] + UDP-N-acetyl-alpha-D-galactosamine = a 3-O-[N-acetyl-alpha-D-galactosaminyl]-L-seryl-[protein] + UDP + H(+). The catalysed reaction is L-threonyl-[protein] + UDP-N-acetyl-alpha-D-galactosamine = a 3-O-[N-acetyl-alpha-D-galactosaminyl]-L-threonyl-[protein] + UDP + H(+). The protein operates within protein modification; protein glycosylation. In terms of biological role, catalyzes the initial reaction in O-linked oligosaccharide biosynthesis, the transfer of an N-acetyl-D-galactosamine residue to a serine or threonine residue on the protein receptor. Glycosylates FGF23. This Taeniopygia guttata (Zebra finch) protein is Polypeptide N-acetylgalactosaminyltransferase 3 (GALNT3).